We begin with the raw amino-acid sequence, 314 residues long: Methionyl-tRNA formyltransferase (314 aa).

A (6S)-5,6,7,8-tetrahydrofolate-binding site is contributed by 113–116; that stretch reads SLLP.

It belongs to the Fmt family.

It carries out the reaction L-methionyl-tRNA(fMet) + (6R)-10-formyltetrahydrofolate = N-formyl-L-methionyl-tRNA(fMet) + (6S)-5,6,7,8-tetrahydrofolate + H(+). In terms of biological role, attaches a formyl group to the free amino group of methionyl-tRNA(fMet). The formyl group appears to play a dual role in the initiator identity of N-formylmethionyl-tRNA by promoting its recognition by IF2 and preventing the misappropriation of this tRNA by the elongation apparatus. In Chlorobaculum tepidum (strain ATCC 49652 / DSM 12025 / NBRC 103806 / TLS) (Chlorobium tepidum), this protein is Methionyl-tRNA formyltransferase.